The chain runs to 119 residues: Methylglyoxal synthase (119 aa).

An MGS-like domain is found at 1–119; sequence MRIALIAHDK…GTADLIIKQF (119 aa). Substrate-binding positions include H8, K12, 34–37, and 54–55; these read TGTT and SG. D60 functions as the Proton donor/acceptor in the catalytic mechanism. A substrate-binding site is contributed by H87.

Belongs to the methylglyoxal synthase family.

The enzyme catalyses dihydroxyacetone phosphate = methylglyoxal + phosphate. Its function is as follows. Catalyzes the formation of methylglyoxal from dihydroxyacetone phosphate. This chain is Methylglyoxal synthase, found in Clostridium botulinum (strain Eklund 17B / Type B).